Reading from the N-terminus, the 369-residue chain is DNA replication and repair protein RecF (369 aa).

G30–T37 lines the ATP pocket.

It belongs to the RecF family.

The protein localises to the cytoplasm. Functionally, the RecF protein is involved in DNA metabolism; it is required for DNA replication and normal SOS inducibility. RecF binds preferentially to single-stranded, linear DNA. It also seems to bind ATP. In Streptococcus agalactiae serotype III (strain NEM316), this protein is DNA replication and repair protein RecF.